We begin with the raw amino-acid sequence, 374 residues long: Alcohol dehydrogenase class-3 (374 aa).

An N-acetylalanine modification is found at A2. Residues C45, H67, C97, C100, C103, C111, and C174 each coordinate Zn(2+). Residue K233 is modified to N6-succinyllysine. S247 bears the Phosphoserine mark. Residue K315 is modified to N6-succinyllysine. S324 and S351 each carry phosphoserine.

The protein belongs to the zinc-containing alcohol dehydrogenase family. Class-III subfamily. In terms of assembly, homodimer. The cofactor is Zn(2+).

The protein localises to the cytoplasm. It catalyses the reaction a primary alcohol + NAD(+) = an aldehyde + NADH + H(+). The catalysed reaction is a secondary alcohol + NAD(+) = a ketone + NADH + H(+). It carries out the reaction S-(hydroxymethyl)glutathione + NADP(+) = S-formylglutathione + NADPH + H(+). The enzyme catalyses S-(hydroxymethyl)glutathione + NAD(+) = S-formylglutathione + NADH + H(+). It catalyses the reaction 20-oxo-(5Z,8Z,11Z,14Z)-eicosatetraenoate + NAD(+) + H2O = (5Z,8Z,11Z,14Z)-eicosatetraenedioate + NADH + 2 H(+). The catalysed reaction is 20-hydroxy-(5Z,8Z,11Z,14Z)-eicosatetraenoate + NAD(+) = 20-oxo-(5Z,8Z,11Z,14Z)-eicosatetraenoate + NADH + H(+). It carries out the reaction S-nitrosoglutathione + NADH + H(+) = S-(hydroxysulfenamide)glutathione + NAD(+). Catalyzes the oxidation of long-chain primary alcohols and the oxidation of S-(hydroxymethyl) glutathione. Also oxidizes long chain omega-hydroxy fatty acids, such as 20-HETE, producing both the intermediate aldehyde, 20-oxoarachidonate and the end product, a dicarboxylic acid, (5Z,8Z,11Z,14Z)-eicosatetraenedioate. Class-III ADH is remarkably ineffective in oxidizing ethanol. Required for clearance of cellular formaldehyde, a cytotoxic and carcinogenic metabolite that induces DNA damage. Also acts as a S-nitroso-glutathione reductase by catalyzing the NADH-dependent reduction of S-nitrosoglutathione, thereby regulating protein S-nitrosylation. This is Alcohol dehydrogenase class-3 from Oryctolagus cuniculus (Rabbit).